The primary structure comprises 200 residues: Probable GTP-binding protein EngB (200 aa).

The region spanning 26–200 (SIPEVALAGR…IYEIAQCIKK (175 aa)) is the EngB-type G domain. Residues 34 to 41 (GRSNVGKS), 61 to 65 (GCTRQ), 80 to 83 (DLPG), 147 to 150 (TKID), and 179 to 181 (VSS) contribute to the GTP site. Residues serine 41 and threonine 63 each contribute to the Mg(2+) site.

The protein belongs to the TRAFAC class TrmE-Era-EngA-EngB-Septin-like GTPase superfamily. EngB GTPase family. It depends on Mg(2+) as a cofactor.

Necessary for normal cell division and for the maintenance of normal septation. This Ehrlichia ruminantium (strain Gardel) protein is Probable GTP-binding protein EngB.